Reading from the N-terminus, the 208-residue chain is Uracil phosphoribosyltransferase (208 aa).

5-phospho-alpha-D-ribose 1-diphosphate contacts are provided by residues Arg78, Arg103, and 130 to 138 (DPMLATGGS). Residues Ile193 and 198–200 (GDA) contribute to the uracil site. Asp199 is a binding site for 5-phospho-alpha-D-ribose 1-diphosphate.

This sequence belongs to the UPRTase family. Requires Mg(2+) as cofactor.

It catalyses the reaction UMP + diphosphate = 5-phospho-alpha-D-ribose 1-diphosphate + uracil. The protein operates within pyrimidine metabolism; UMP biosynthesis via salvage pathway; UMP from uracil: step 1/1. Allosterically activated by GTP. Its function is as follows. Catalyzes the conversion of uracil and 5-phospho-alpha-D-ribose 1-diphosphate (PRPP) to UMP and diphosphate. The chain is Uracil phosphoribosyltransferase from Klebsiella pneumoniae (strain 342).